The sequence spans 382 residues: Protein-arginine rhamnosyltransferase (382 aa).

DTDP-beta-L-rhamnose contacts are provided by residues 17–20, tyrosine 187, glutamine 252, and 268–272; these read NFGD and RGEDS. The active-site Proton acceptor is aspartate 20. Glutamate 270 is an active-site residue.

Belongs to the glycosyltransferase 104 family.

It carries out the reaction dTDP-beta-L-rhamnose + L-arginyl-[protein] = N(omega)-(alpha-L-rhamnosyl)-L-arginyl-[protein] + dTDP + H(+). In terms of biological role, protein-arginine rhamnosyltransferase that catalyzes the transfer of a single rhamnose to elongation factor P (EF-P) on 'Lys-32', a modification required for EF-P-dependent rescue of polyproline stalled ribosomes. This chain is Protein-arginine rhamnosyltransferase, found in Neisseria meningitidis.